Here is a 240-residue protein sequence, read N- to C-terminus: Ribonuclease PH (240 aa).

Residues R87 and 125 to 127 (GTR) each bind phosphate.

It belongs to the RNase PH family. Homohexameric ring arranged as a trimer of dimers.

It carries out the reaction tRNA(n+1) + phosphate = tRNA(n) + a ribonucleoside 5'-diphosphate. In terms of biological role, phosphorolytic 3'-5' exoribonuclease that plays an important role in tRNA 3'-end maturation. Removes nucleotide residues following the 3'-CCA terminus of tRNAs; can also add nucleotides to the ends of RNA molecules by using nucleoside diphosphates as substrates, but this may not be physiologically important. Probably plays a role in initiation of 16S rRNA degradation (leading to ribosome degradation) during starvation. The chain is Ribonuclease PH from Ruminiclostridium cellulolyticum (strain ATCC 35319 / DSM 5812 / JCM 6584 / H10) (Clostridium cellulolyticum).